The primary structure comprises 152 residues: UPF0178 protein YaiI (152 aa).

It belongs to the UPF0178 family.

The sequence is that of UPF0178 protein YaiI from Escherichia coli O17:K52:H18 (strain UMN026 / ExPEC).